The chain runs to 337 residues: MRVLGIETSCDETGIAIYDDEKGLLANQLYSQVKLHADYGGVVPELASRDHVRKTVPLIQEALKESGLTAKDIDAVAYTAGPGLVGALLVGATVGRSLAFAWDVPAIPVHHMEGHLLAPMLEDNPPAFPFVALLVSGGHTQLISVTGIGQYELLGESIDDAAGEAFDKTAKLLGLDYPGGPLLSKMAAQGTAGRFVFPRPMTDRPGLDFSFSGLKTFAANTIRDNGTDDQTRADIARAFEDAVVDTLMIKCKRALDQTGFKRLVMAGGVSANRTLRAKLAEMMKKRRGEVFYARPEFCTDNGAMIAYAGMVRFKAGATADLGVSVRPRWPLAELPAA.

Positions 111 and 115 each coordinate Fe cation. Residues 134-138, aspartate 167, glycine 180, and asparagine 272 contribute to the substrate site; that span reads LVSGG. Aspartate 300 contacts Fe cation.

It belongs to the KAE1 / TsaD family. Fe(2+) is required as a cofactor.

It localises to the cytoplasm. The enzyme catalyses L-threonylcarbamoyladenylate + adenosine(37) in tRNA = N(6)-L-threonylcarbamoyladenosine(37) in tRNA + AMP + H(+). In terms of biological role, required for the formation of a threonylcarbamoyl group on adenosine at position 37 (t(6)A37) in tRNAs that read codons beginning with adenine. Is involved in the transfer of the threonylcarbamoyl moiety of threonylcarbamoyl-AMP (TC-AMP) to the N6 group of A37, together with TsaE and TsaB. TsaD likely plays a direct catalytic role in this reaction. This Escherichia coli (strain SMS-3-5 / SECEC) protein is tRNA N6-adenosine threonylcarbamoyltransferase.